The following is a 131-amino-acid chain: Transcription antitermination protein NusB (131 aa).

The protein belongs to the NusB family.

Involved in transcription antitermination. Required for transcription of ribosomal RNA (rRNA) genes. Binds specifically to the boxA antiterminator sequence of the ribosomal RNA (rrn) operons. This is Transcription antitermination protein NusB from Agathobacter rectalis (strain ATCC 33656 / DSM 3377 / JCM 17463 / KCTC 5835 / VPI 0990) (Eubacterium rectale).